Consider the following 64-residue polypeptide: Prokaryotic ubiquitin-like protein Pup (64 aa).

Residues 1 to 37 are disordered; that stretch reads MAQEQTKRGGGGGDDDDIAGSTAAGQERREKLTEETD. An ARC ATPase binding region spans residues 21-58; that stretch reads STAAGQERREKLTEETDDLLDEIDDVLEENAEDFVRAY. The stretch at 23-52 forms a coiled coil; sequence AAGQERREKLTEETDDLLDEIDDVLEENAE. At Q64 the chain carries Deamidated glutamine. An Isoglutamyl lysine isopeptide (Gln-Lys) (interchain with K-? in acceptor proteins) cross-link involves residue Q64.

It belongs to the prokaryotic ubiquitin-like protein family. Strongly interacts with the proteasome-associated ATPase ARC through a hydrophobic interface; the interacting region of Pup lies in its C-terminal half. There is one Pup binding site per ARC hexamer ring. Post-translationally, is modified by deamidation of its C-terminal glutamine to glutamate by the deamidase Dop, a prerequisite to the subsequent pupylation process.

The protein operates within protein degradation; proteasomal Pup-dependent pathway. Functionally, protein modifier that is covalently attached to lysine residues of substrate proteins, thereby targeting them for proteasomal degradation. The tagging system is termed pupylation. This chain is Prokaryotic ubiquitin-like protein Pup, found in Mycobacterium tuberculosis (strain ATCC 25177 / H37Ra).